Consider the following 338-residue polypeptide: MKVYYDKDADLSLIKGKSVAIIGYGSQGHAHAQNLNDSGVKVTVGLRRGGASWNKVEKAGLKVAEVADAVKSADVVMILLPDEQIASVYSAEVAPNIKQGASLAFAHGFNVHYGQVVPREDLDVWMVAPKAPGHTVRNTYTQGGGVPHLIAVHADKTGKARDLALSYAAANGGGKAGIIETNFREETETDLFGEQAVLCGGTVELIKAGFETLVEAGYAPEMAYFECLHELKLIVDLIYEGGIANMNYSISNNAEYGEYVTGPRVVTEDTKAAMRQCLKDIQTGEYAKSFILENRAGAPTLLSRRRLTAEHDIEVVGEKLRAMMPWIKANKLVDKSRN.

Residues Met-1–Thr-181 form the KARI N-terminal Rossmann domain. Residues Tyr-24–Gln-27, Arg-47, and Ser-52 contribute to the NADP(+) site. The active site involves His-107. Residue Gly-133 participates in NADP(+) binding. The KARI C-terminal knotted domain occupies Asn-182 to Ile-327. The Mg(2+) site is built by Asp-190, Glu-194, Glu-226, and Glu-230. Residue Ser-251 coordinates substrate.

Belongs to the ketol-acid reductoisomerase family. Mg(2+) serves as cofactor.

The catalysed reaction is (2R)-2,3-dihydroxy-3-methylbutanoate + NADP(+) = (2S)-2-acetolactate + NADPH + H(+). It catalyses the reaction (2R,3R)-2,3-dihydroxy-3-methylpentanoate + NADP(+) = (S)-2-ethyl-2-hydroxy-3-oxobutanoate + NADPH + H(+). Its pathway is amino-acid biosynthesis; L-isoleucine biosynthesis; L-isoleucine from 2-oxobutanoate: step 2/4. It participates in amino-acid biosynthesis; L-valine biosynthesis; L-valine from pyruvate: step 2/4. Involved in the biosynthesis of branched-chain amino acids (BCAA). Catalyzes an alkyl-migration followed by a ketol-acid reduction of (S)-2-acetolactate (S2AL) to yield (R)-2,3-dihydroxy-isovalerate. In the isomerase reaction, S2AL is rearranged via a Mg-dependent methyl migration to produce 3-hydroxy-3-methyl-2-ketobutyrate (HMKB). In the reductase reaction, this 2-ketoacid undergoes a metal-dependent reduction by NADPH to yield (R)-2,3-dihydroxy-isovalerate. This is Ketol-acid reductoisomerase (NADP(+)) from Methylibium petroleiphilum (strain ATCC BAA-1232 / LMG 22953 / PM1).